A 162-amino-acid chain; its full sequence is CASP-like protein 0U1 (162 aa).

Topologically, residues 1 to 11 (MAAVEAAKTPR) are cytoplasmic. Residues 12 to 32 (FILLIIEWVFALVAFAVMGHY) form a helical membrane-spanning segment. The Extracellular portion of the chain corresponds to 33–43 (LFDDRRSSFEY). The helical transmembrane segment at 44 to 64 (LTAICILVWLVVMIYMVILCC) threads the bilayer. Topologically, residues 65-69 (GRALP) are cytoplasmic. Residues 70–90 (PLIEAAIFLLFAILVFIAFLV) form a helical membrane-spanning segment. The Extracellular segment spans residues 91–123 (TAVKCNNSETIVIAGQTISRKVCEGESEPKAAA). The N-linked (GlcNAc...) asparagine glycan is linked to N96. A helical membrane pass occupies residues 124–144 (AFAFLLGLLLAGSSVLGCIAF). Over 145–162 (RRPSAPPLSSFQNPTSSV) the chain is Cytoplasmic.

This sequence belongs to the Casparian strip membrane proteins (CASP) family. As to quaternary structure, homodimer and heterodimers.

The protein resides in the cell membrane. The sequence is that of CASP-like protein 0U1 from Chlorokybus atmophyticus (Soil alga).